A 659-amino-acid polypeptide reads, in one-letter code: Putative RING finger protein R311 (659 aa).

An RING-type zinc finger spans residues 502-540 (CPVCYDDDYIKTKLICGHTVCLTCVLNILPNSKGCPLCM).

The polypeptide is Putative RING finger protein R311 (Acanthamoeba polyphaga (Amoeba)).